Reading from the N-terminus, the 487-residue chain is UDP-glycosyltransferase 85A7 (487 aa).

UDP-alpha-D-glucose-binding positions include 364–366 (CPQ), 381–389 (HCGWNSTLE), and 403–406 (FSEQ).

Belongs to the UDP-glycosyltransferase family. Expressed in roots, shoots, leaves and flowers.

This chain is UDP-glycosyltransferase 85A7 (UGT85A7), found in Arabidopsis thaliana (Mouse-ear cress).